The following is a 431-amino-acid chain: MSKIVKIIGREIIDSRGNPTVEAEVHLEGGFVGMAAAPSGASTGSREALELRDGDKSRFLGKGVTKAVAAVNGPIAQALIGKDAKDQAGIDKIMIDLDGTENKSKFGANAILAVSLANAKAAAAAKGMPLYEHIAELNGTPGKYSMPVPMMNIINGGEHADNNVDIQEFMIQPVGAKTVKEAIRMGSEVFHHLAKVLKAKGMNTAVGDEGGYAPNLGSNAEALAVIAEAVKAAGYELGKDITLAMDCAASEFYKDGKYVLAGEGNKAFTSEEFTHFLEELTKQYPIVSIEDGLDESDWDGFAYQTKFWRQNPAGCDDLFVTNTKILKEGIEKGIANSILIKFNQIGSLTETLAAIKMAKDAGYTAVISHRSGETEDATIADLAVGTAAGQIKTGSMSRSDRVAKYNQLIRIEEALGEKAPYNGRKEIKGQA.

Q167 is a binding site for (2R)-2-phosphoglycerate. The active-site Proton donor is the E209. Mg(2+) contacts are provided by D246, E290, and D316. Positions 341, 370, 371, and 392 each coordinate (2R)-2-phosphoglycerate. K341 acts as the Proton acceptor in catalysis.

Belongs to the enolase family. In terms of assembly, component of the RNA degradosome, a multiprotein complex involved in RNA processing and mRNA degradation. The cofactor is Mg(2+).

The protein localises to the cytoplasm. It localises to the secreted. It is found in the cell surface. The enzyme catalyses (2R)-2-phosphoglycerate = phosphoenolpyruvate + H2O. Its pathway is carbohydrate degradation; glycolysis; pyruvate from D-glyceraldehyde 3-phosphate: step 4/5. Catalyzes the reversible conversion of 2-phosphoglycerate (2-PG) into phosphoenolpyruvate (PEP). It is essential for the degradation of carbohydrates via glycolysis. The polypeptide is Enolase (Shigella flexneri serotype 5b (strain 8401)).